A 693-amino-acid chain; its full sequence is Polyribonucleotide nucleotidyltransferase (693 aa).

Aspartate 486 and aspartate 492 together coordinate Mg(2+). Positions 553-612 (PRFTTLKIHPDKIRDVIGKGGATIRALTEETGTSIDISDDGTVKIASVDKAAGDEARRRI) constitute a KH domain. The 69-residue stretch at 622 to 690 (GRIYEGRVVK…KQGRIRLSMK (69 aa)) folds into the S1 motif domain.

This sequence belongs to the polyribonucleotide nucleotidyltransferase family. Component of the RNA degradosome, which is a multiprotein complex involved in RNA processing and mRNA degradation. The cofactor is Mg(2+).

The protein resides in the cytoplasm. The enzyme catalyses RNA(n+1) + phosphate = RNA(n) + a ribonucleoside 5'-diphosphate. Involved in mRNA degradation. Catalyzes the phosphorolysis of single-stranded polyribonucleotides processively in the 3'- to 5'-direction. The chain is Polyribonucleotide nucleotidyltransferase from Thioalkalivibrio sulfidiphilus (strain HL-EbGR7).